Consider the following 89-residue polypeptide: Small ribosomal subunit protein uS15 (89 aa).

Belongs to the universal ribosomal protein uS15 family. Part of the 30S ribosomal subunit. Forms a bridge to the 50S subunit in the 70S ribosome, contacting the 23S rRNA.

Its function is as follows. One of the primary rRNA binding proteins, it binds directly to 16S rRNA where it helps nucleate assembly of the platform of the 30S subunit by binding and bridging several RNA helices of the 16S rRNA. In terms of biological role, forms an intersubunit bridge (bridge B4) with the 23S rRNA of the 50S subunit in the ribosome. The polypeptide is Small ribosomal subunit protein uS15 (Hyphomonas neptunium (strain ATCC 15444)).